A 417-amino-acid polypeptide reads, in one-letter code: Tyrosine--tRNA ligase (417 aa).

L-tyrosine is bound at residue Tyr-39. Positions 44–53 (PTASSLHVGH) match the 'HIGH' region motif. Positions 176 and 180 each coordinate L-tyrosine. Residues 236 to 240 (KMGKS) carry the 'KMSKS' region motif. Lys-239 lines the ATP pocket. The region spanning 350 to 416 (VGVLSLIVRA…GKKKHVLVRP (67 aa)) is the S4 RNA-binding domain.

It belongs to the class-I aminoacyl-tRNA synthetase family. TyrS type 1 subfamily. Homodimer.

It is found in the cytoplasm. It catalyses the reaction tRNA(Tyr) + L-tyrosine + ATP = L-tyrosyl-tRNA(Tyr) + AMP + diphosphate + H(+). Functionally, catalyzes the attachment of tyrosine to tRNA(Tyr) in a two-step reaction: tyrosine is first activated by ATP to form Tyr-AMP and then transferred to the acceptor end of tRNA(Tyr). This chain is Tyrosine--tRNA ligase, found in Agrobacterium fabrum (strain C58 / ATCC 33970) (Agrobacterium tumefaciens (strain C58)).